Here is a 285-residue protein sequence, read N- to C-terminus: Type II secretion system protein C (285 aa).

At 1 to 27 (MARLQAFKDPSFHSLVATFRSLPLIRR) the chain is on the cytoplasmic side. Residues 28–48 (FVLGLILLLICQQLAVLTWRF) traverse the membrane as a helical segment. Residues 49-285 (LLPEDSRIVG…DIYLALDGDH (237 aa)) are Periplasmic-facing.

This sequence belongs to the GSP C family.

It localises to the cell inner membrane. Involved in a type II secretion system (T2SS, formerly general secretion pathway, GSP) for the export of proteins. Required for the translocation of the multiple pectic enzymes. The protein is Type II secretion system protein C (outC) of Pectobacterium carotovorum subsp. carotovorum (Erwinia carotovora subsp. carotovora).